A 591-amino-acid chain; its full sequence is Negative elongation factor D (591 aa).

Residues 1–44 (MAGPAPGTIMGEDYFGNASEWGEEADGGQHQEDDSGEGEDDAEV) form a disordered region. The segment covering 34–44 (DSGEGEDDAEV) has biased composition (acidic residues).

The protein belongs to the NELF-D family. The NELF complex is composed of NELFA, NELFB, NELFCD and NELFE; NELFA and NELFCD form a stable subcomplex that binds primarily through NELFCD to the N-terminus of NELFB. Binds RNA which may help to stabilize the NELF complex on nucleic acid. In vitro, the NELFA:NELFCD subcomplex binds to ssDNA and ssRNA in a sequence- and structure-dependent manner. Interacts with ARAF1. Interacts with PCF11. Interacts with NELFB. Interacts with KAT8.

It localises to the nucleus. Functionally, essential component of the NELF complex, a complex that negatively regulates the elongation of transcription by RNA polymerase II. The NELF complex, which acts via an association with the DSIF complex and causes transcriptional pausing, is counteracted by the P-TEFb kinase complex. The chain is Negative elongation factor D (Nelfcd) from Mus musculus (Mouse).